Here is a 213-residue protein sequence, read N- to C-terminus: Probable septum site-determining protein MinC (213 aa).

The protein belongs to the MinC family. Interacts with MinD and FtsZ.

Its function is as follows. Cell division inhibitor that blocks the formation of polar Z ring septums. Rapidly oscillates between the poles of the cell to destabilize FtsZ filaments that have formed before they mature into polar Z rings. Prevents FtsZ polymerization. This Pseudothermotoga lettingae (strain ATCC BAA-301 / DSM 14385 / NBRC 107922 / TMO) (Thermotoga lettingae) protein is Probable septum site-determining protein MinC.